Consider the following 1096-residue polypeptide: Constitutive coactivator of PPAR-gamma-like protein 2 (1096 aa).

Low complexity predominate over residues 35–59 (QQQHLHRQLPPTAALAPGAPRAARG). Disordered regions lie at residues 35–113 (QQQH…PPQL), 508–579 (NYLP…DGEP), and 971–1096 (SRSS…RKED). Residue Arg58 is modified to Omega-N-methylarginine. Residues 82–95 (TRHHHPAHHFHHHG) show a composition bias toward basic residues. The segment covering 101-113 (LHPPLPPPPPPQL) has biased composition (pro residues). Over residues 540-559 (HITEAFHHQPEWGNPNRDRG) the composition is skewed to basic and acidic residues. Arg977 carries the post-translational modification Omega-N-methylarginine. 2 stretches are compositionally biased toward basic and acidic residues: residues 1041-1050 (IKEEKSDHRL) and 1076-1096 (NREKNHLQEQKLETVAQRKED). Lys1042 participates in a covalent cross-link: Glycyl lysine isopeptide (Lys-Gly) (interchain with G-Cter in SUMO2).

The protein belongs to the constitutive coactivator of PPAR-gamma family. In terms of tissue distribution, expressed at low levels in a number of tissues.

This chain is Constitutive coactivator of PPAR-gamma-like protein 2 (FAM120C), found in Homo sapiens (Human).